Reading from the N-terminus, the 592-residue chain is Prospero homeobox protein 2 (592 aa).

Disordered stretches follow at residues 20-56, 85-129, 155-218, 308-336, and 353-382; these read EACT…PEWF, GNAQ…RKGG, KPRD…LPSG, RLDS…PLTA, and RYNN…LRPW. Positions 95-106 are enriched in basic residues; that stretch reads CPKKARERKRKQ. Residues 201-211 show a composition bias toward basic and acidic residues; the sequence is SGAEKHQESEK. A compositionally biased stretch (pro residues) spans 314–331; it reads YPIPPRMTPKPCQDPPAN. Residues 360 to 377 are compositionally biased toward low complexity; sequence SSSPPQDSSSQRHPSSEP. In terms of domain architecture, Prospero-type homeo spans 437-495; it reads QEGLNPGHLKKAKLMFFFTRYPSSNLLKVYFPDVQFNRCITSQMIKWFSNFREFYYIQM. Residues 437 to 592 are homeo-Prospero; that stretch reads QEGLNPGHLK…EIFKSSSYPQ (156 aa). The Prospero domain maps to 496-592; that stretch reads EKSARQAISD…EIFKSSSYPQ (97 aa).

The protein belongs to the Prospero homeodomain family.

The protein resides in the nucleus. In terms of biological role, transcription regulator. Does not seem to be essential for embryonic development and postnatal survival. This Homo sapiens (Human) protein is Prospero homeobox protein 2 (PROX2).